Here is a 456-residue protein sequence, read N- to C-terminus: Tyrosine phenol-lyase (456 aa).

An N6-(pyridoxal phosphate)lysine modification is found at Lys257.

The protein belongs to the beta-eliminating lyase family. In terms of assembly, homotetramer. Requires pyridoxal 5'-phosphate as cofactor.

The catalysed reaction is L-tyrosine + H2O = phenol + pyruvate + NH4(+). The sequence is that of Tyrosine phenol-lyase (tpl) from Citrobacter freundii.